A 117-amino-acid chain; its full sequence is Mitochondrial import inner membrane translocase subunit Tim10B (117 aa).

The short motif at 22–46 (CFSRCVDNLSQRDLGGHEDLCVDRC) is the Twin CX3C motif element. 2 cysteine pairs are disulfide-bonded: Cys22-Cys46 and Cys26-Cys42. Residues 75 to 97 (EMEENARKAEQQQREQEKERLKE) are compositionally biased toward basic and acidic residues. Positions 75–117 (EMEENARKAEQQQREQEKERLKEAAATAVLTPVQPPVAGNLSM) are disordered.

Belongs to the small Tim family. Component of the TIM22 complex, whose core is composed of Tim22, associated with peripheral protein Tim9b/Tim10b and the 70 kDa heterohexamer. In most cases, the 70 kDa complex is composed of TIMM9 and TIMM10.

Its subcellular location is the mitochondrion inner membrane. Component of the TIM22 complex, a complex that mediates the import and insertion of multi-pass transmembrane proteins into the mitochondrial inner membrane. The TIM22 complex forms a twin-pore translocase that uses the membrane potential as the external driving force. In the TIM22 complex, it may act as a docking point for the soluble 70 kDa complex that guides the target proteins in transit through the aqueous mitochondrial intermembrane space. The sequence is that of Mitochondrial import inner membrane translocase subunit Tim10B (Tim9b) from Drosophila melanogaster (Fruit fly).